The chain runs to 202 residues: UPF0301 protein BCG_0069 (202 aa).

It belongs to the UPF0301 (AlgH) family.

In Mycobacterium bovis (strain BCG / Pasteur 1173P2), this protein is UPF0301 protein BCG_0069.